The primary structure comprises 94 residues: MTVSNTVDQYTIMSGDRSKIKDLLCNRLTECGWRDEVRLLCRNILVEKNGNNSLSVEQLIAEVTPKARTLVPDAVKKELLMKIRTILAENEGDN.

The protein belongs to the ENY2 family. As to quaternary structure, component of the nuclear pore complex (NPC)-associated AMEX complex (anchoring and mRNA export complex), composed of at least e(y)2 and xmas-2. Component of the SAGA transcription coactivator-HAT complexes, at least composed of Ada2b, e(y)2, Pcaf/Gcn5, Taf10 and Nipped-A/Trrap. Within the SAGA complex, e(y)2, Sgf11, and not/nonstop form an additional subcomplex of SAGA called the DUB module (deubiquitination module). Component of the THO complex, composed of at least e(y)2, HPR1, THO2, THOC5, THOC6 and THOC7. Interacts with e(y)1. Interacts with su(Hw) (via zinc fingers). Interacts with xmas-2; required for localization to the nuclear periphery. Interacts with the nuclear pore complex (NPC).

Its subcellular location is the nucleus. The protein resides in the nucleoplasm. It is found in the cytoplasm. Involved in mRNA export coupled transcription activation by association with both the AMEX and the SAGA complexes. The SAGA complex is a multiprotein complex that activates transcription by remodeling chromatin and mediating histone acetylation and deubiquitination. Within the SAGA complex, participates in a subcomplex that specifically deubiquitinates histone H2B. The SAGA complex is recruited to specific gene promoters by activators, where it is required for transcription. Required for nuclear receptor-mediated transactivation. Involved in transcription elongation by recruiting the THO complex onto nascent mRNA. The AMEX complex functions in docking export-competent ribonucleoprotein particles (mRNPs) to the nuclear entrance of the nuclear pore complex (nuclear basket). AMEX participates in mRNA export and accurate chromatin positioning in the nucleus by tethering genes to the nuclear periphery. The chain is Enhancer of yellow 2 transcription factor from Drosophila mojavensis (Fruit fly).